The following is a 332-amino-acid chain: Ketol-acid reductoisomerase (NADP(+)) (332 aa).

Residues 5–185 enclose the KARI N-terminal Rossmann domain; that stretch reads VKVYYDDEVS…GCTRAGVIET (181 aa). Residues 28–31, arginine 51, serine 56, and 86–89 contribute to the NADP(+) site; these read YGNQ and DLVQ. Histidine 111 is a catalytic residue. Glycine 137 serves as a coordination point for NADP(+). One can recognise a KARI C-terminal knotted domain in the interval 186–331; the sequence is TFKDETESDL…RFIRKMSGLE (146 aa). Mg(2+) is bound by residues aspartate 194, glutamate 198, glutamate 230, and glutamate 234. Residue serine 255 participates in substrate binding.

Belongs to the ketol-acid reductoisomerase family. Requires Mg(2+) as cofactor.

It carries out the reaction (2R)-2,3-dihydroxy-3-methylbutanoate + NADP(+) = (2S)-2-acetolactate + NADPH + H(+). The catalysed reaction is (2R,3R)-2,3-dihydroxy-3-methylpentanoate + NADP(+) = (S)-2-ethyl-2-hydroxy-3-oxobutanoate + NADPH + H(+). Its pathway is amino-acid biosynthesis; L-isoleucine biosynthesis; L-isoleucine from 2-oxobutanoate: step 2/4. The protein operates within amino-acid biosynthesis; L-valine biosynthesis; L-valine from pyruvate: step 2/4. Involved in the biosynthesis of branched-chain amino acids (BCAA). Catalyzes an alkyl-migration followed by a ketol-acid reduction of (S)-2-acetolactate (S2AL) to yield (R)-2,3-dihydroxy-isovalerate. In the isomerase reaction, S2AL is rearranged via a Mg-dependent methyl migration to produce 3-hydroxy-3-methyl-2-ketobutyrate (HMKB). In the reductase reaction, this 2-ketoacid undergoes a metal-dependent reduction by NADPH to yield (R)-2,3-dihydroxy-isovalerate. This is Ketol-acid reductoisomerase (NADP(+)) from Pyrococcus abyssi (strain GE5 / Orsay).